Reading from the N-terminus, the 445-residue chain is 3-phosphoshikimate 1-carboxyvinyltransferase (445 aa).

The tract at residues 1-20 is disordered; that stretch reads MSTSAAPTPLESRASGPLSG. 3-phosphoshikimate-binding residues include lysine 28, serine 29, and arginine 33. Lysine 28 lines the phosphoenolpyruvate pocket. Phosphoenolpyruvate contacts are provided by glycine 101 and arginine 129. Residues serine 175, glutamine 177, aspartate 328, and lysine 355 each contribute to the 3-phosphoshikimate site. Glutamine 177 lines the phosphoenolpyruvate pocket. Residue aspartate 328 is the Proton acceptor of the active site. The phosphoenolpyruvate site is built by arginine 359 and arginine 402.

Belongs to the EPSP synthase family. In terms of assembly, monomer.

The protein resides in the cytoplasm. It catalyses the reaction 3-phosphoshikimate + phosphoenolpyruvate = 5-O-(1-carboxyvinyl)-3-phosphoshikimate + phosphate. It participates in metabolic intermediate biosynthesis; chorismate biosynthesis; chorismate from D-erythrose 4-phosphate and phosphoenolpyruvate: step 6/7. In terms of biological role, catalyzes the transfer of the enolpyruvyl moiety of phosphoenolpyruvate (PEP) to the 5-hydroxyl of shikimate-3-phosphate (S3P) to produce enolpyruvyl shikimate-3-phosphate and inorganic phosphate. This Bradyrhizobium sp. (strain ORS 278) protein is 3-phosphoshikimate 1-carboxyvinyltransferase.